Here is a 484-residue protein sequence, read N- to C-terminus: Pre-glycoprotein polyprotein GP complex (484 aa).

Gly2 carries N-myristoyl glycine; by host lipidation. At 2-17 (GQLVSFFQEIPNIIQE) the chain is on the extracellular side. A helical transmembrane segment spans residues 18–33 (AINIALIAVSLIAILK). The Cytoplasmic portion of the chain corresponds to 34 to 58 (GLVNLWKSGLFQLLVFLILAGRSCS). Cys57 lines the Zn(2+) pocket. The Extracellular portion of the chain corresponds to 59–423 (FKIGRSTELQ…QGKTPITLVD (365 aa)). 4 disulfides stabilise this stretch: Cys85/Cys225, Cys270/Cys283, Cys292/Cys301, and Cys355/Cys376. N-linked (GlcNAc...) asparagine; by host glycosylation is found at Asn88, Asn125, Asn178, and Asn218. N-linked (GlcNAc...) asparagine; by host glycans are attached at residues Asn356, Asn364, Asn381, and Asn386. Residues 424–444 (ICFWSTLFFTTTLFLHLVGFP) traverse the membrane as a helical segment. The Cytoplasmic portion of the chain corresponds to 445 to 484 (THRHIQGEPCPLPHKLNSNGGCRCGRYPELKKPTTWHRKH). Positions 446, 448, 454, 458, 466, 468, and 484 each coordinate Zn(2+).

The protein belongs to the arenaviridae GPC protein family. Interacts with glycoprotein G2. Part of the GP complex (GP-C) together with glycoprotein G1 and glycoprotein G2. The GP-complex interacts with protein Z, which interacts with ribonucleocapsid; these interactions may induce virion budding. In terms of assembly, homotrimer; disulfide-linked. In pre-fusion state, G1 homotrimers bind G2 homotrimers via ionic interactions. Part of the GP complex (GP-C) together with glycoprotein G2 and the stable signal peptide. The GP-complex interacts with protein Z, which interacts with ribonucleocapsid; these interactions may induce virion budding. As to quaternary structure, homotrimer. Interacts with the stable signal peptide. In pre-fusion state, G2 homotrimers bind G1 homotrimers via ionic interactions. Part of the GP complex (GP-C) together with glycoprotein G1 and the stable signal peptide. Acidification in the endosome triggers rearrangements, which ultimately leads to a 6 helix bundle formed by the two heptad repeat domains (HR1 and HR2) in post-fusion state. The GP-complex interacts with protein Z, which interacts with ribonucleocapsid; these interactions may induce virion budding. In terms of processing, specific enzymatic cleavages in vivo yield mature proteins. GP-C polyprotein is cleaved in the endoplasmic reticulum by the host protease MBTPS1. Only cleaved glycoprotein is incorporated into virions. Post-translationally, the SSP remains stably associated with the GP complex following cleavage by signal peptidase and plays crucial roles in the trafficking of GP through the secretory pathway. Myristoylation is necessary for GP2-mediated fusion activity.

It is found in the virion membrane. It localises to the host endoplasmic reticulum membrane. The protein resides in the host Golgi apparatus membrane. The protein localises to the host cell membrane. Its function is as follows. Functions as a cleaved signal peptide that is retained as the third component of the GP complex (GP-C). Helps to stabilize the spike complex in its native conformation. The SSP is required for efficient glycoprotein expression, post-translational maturation cleavage of G1 and G2, glycoprotein transport to the cell surface plasma membrane, formation of infectious virus particles, and acid pH-dependent glycoprotein-mediated cell fusion. Glycoprotein G1: Forms the virion spikes together with glycoprotein G2. The glycoprotein spike trimers are connected to the underlying matrix. Interacts with the host receptor leading to virus endocytosis. Functionally, forms the virion spikes together with glycoprotein G1. The glycoprotein spike trimers are connected to the underlying matrix. Class I viral fusion protein that directs fusion of viral and host endosomal membranes, leading to delivery of the nucleocapsid into the cytoplasm. Membrane fusion is mediated by irreversible conformational changes induced by acidification. This Chapare mammarenavirus (isolate Human/Bolivia/810419/2003) protein is Pre-glycoprotein polyprotein GP complex.